The following is a 277-amino-acid chain: Probable CCR4-associated factor 1 homolog 10 (277 aa).

Residues aspartate 40, glutamate 42, aspartate 166, and aspartate 235 each contribute to the a divalent metal cation site.

The protein belongs to the CAF1 family. In terms of assembly, component of the CCR4-NOT complex, at least composed of CRR4 and CAF1 proteins. A divalent metal cation serves as cofactor.

The protein localises to the nucleus. Its subcellular location is the cytoplasm. It catalyses the reaction Exonucleolytic cleavage of poly(A) to 5'-AMP.. Its function is as follows. Ubiquitous transcription factor required for a diverse set of processes. It is a component of the CCR4 complex involved in the control of gene expression. The protein is Probable CCR4-associated factor 1 homolog 10 (CAF1-10) of Arabidopsis thaliana (Mouse-ear cress).